The following is a 276-amino-acid chain: Diaminopimelate epimerase (276 aa).

Substrate is bound by residues asparagine 13, glutamine 46, and asparagine 66. Cysteine 75 acts as the Proton donor in catalysis. Residues 76–77 (GN), asparagine 159, asparagine 192, and 210–211 (ER) each bind substrate. The Proton acceptor role is filled by cysteine 219. A substrate-binding site is contributed by 220–221 (GT).

The protein belongs to the diaminopimelate epimerase family. As to quaternary structure, homodimer.

It localises to the cytoplasm. It catalyses the reaction (2S,6S)-2,6-diaminopimelate = meso-2,6-diaminopimelate. It functions in the pathway amino-acid biosynthesis; L-lysine biosynthesis via DAP pathway; DL-2,6-diaminopimelate from LL-2,6-diaminopimelate: step 1/1. Catalyzes the stereoinversion of LL-2,6-diaminopimelate (L,L-DAP) to meso-diaminopimelate (meso-DAP), a precursor of L-lysine and an essential component of the bacterial peptidoglycan. The chain is Diaminopimelate epimerase from Pseudomonas syringae pv. tomato (strain ATCC BAA-871 / DC3000).